The following is a 339-amino-acid chain: Methionine import ATP-binding protein MetN 2 (339 aa).

The ABC transporter domain maps to Ile-2–Val-241. Residue Gly-38–Ser-45 coordinates ATP.

The protein belongs to the ABC transporter superfamily. Methionine importer (TC 3.A.1.24) family. The complex is composed of two ATP-binding proteins (MetN), two transmembrane proteins (MetI) and a solute-binding protein (MetQ).

The protein resides in the cell membrane. It carries out the reaction L-methionine(out) + ATP + H2O = L-methionine(in) + ADP + phosphate + H(+). The enzyme catalyses D-methionine(out) + ATP + H2O = D-methionine(in) + ADP + phosphate + H(+). Part of the ABC transporter complex MetNIQ involved in methionine import. Responsible for energy coupling to the transport system. This Bacillus cereus (strain ATCC 14579 / DSM 31 / CCUG 7414 / JCM 2152 / NBRC 15305 / NCIMB 9373 / NCTC 2599 / NRRL B-3711) protein is Methionine import ATP-binding protein MetN 2.